A 166-amino-acid polypeptide reads, in one-letter code: Emerin homolog 1 (166 aa).

The LEM domain maps to 1-44 (MDVSQLTDAELRDSLKSHGVSVGPIVATTRKLYEKKLIKLSDGS). At 1–127 (MDVSQLTDAE…QAQSNKGGFL (127 aa)) the chain is on the nuclear side. A disordered region spans residues 62–99 (IISSSPKKSPPQRVFQNVSAATAAATTSPESDSDDCEE). Residues 128-148 (GSTITFTILFVFIAVFAYFLI) traverse the membrane as a helical segment. Residues 149 to 166 (ENAEQLKLVAETNPEDTI) are Perinuclear space-facing.

As to quaternary structure, interacts with lmn-1 and baf-1. Ubiquitous. Expressed in all cells, except in cells undergoing spermatogenesis. High expression in hypodermis, neurons, pharyngeal muscle, body wall muscle and gonadal sheath.

Its subcellular location is the nucleus inner membrane. The protein resides in the nucleus envelope. Its function is as follows. Nuclear lamina-associated inner nuclear membrane protein that is involved in cell division, nuclear structure organization, maintenance of nuclear envelope integrity and nuclear envelope reformation after mitosis. Involved in chromosome segregation and cell division, probably via its interaction with the nuclear intermediate filament protein lmn-1, the main component of nuclear lamina. Required to organize the distribution of lmn-1, nuclear pore complexes (NPCs) and chromatin in mitotically active cells. Together with lem-2, plays a role in baf-1 enrichment at the nuclear envelope in anaphase. Together with lem-2, involved in muscle cell attachment to hypodermal cells, as well as muscle cell location and sarcomere organization. May play a role in radiation-induced DNA damage repair response. May repress binding of transcription factor pha-4 with target sequences in pharyngeal cells. In Caenorhabditis elegans, this protein is Emerin homolog 1 (emr-1).